The chain runs to 1412 residues: MRQFKEIPFYNQIVDKGTIKQLIGRLVAHFGSTYTSHILDKLKELGFEYGTKTGISLGIDDLLITPSKKWLIQDAEQQAQASDSHYNSGNLHAVEKLRQLIETWHTTSEYLKQEMNPNFRITDPFNPVHMMAFSGARGTTSQVHQLVGMRGLMSDPHGQIIDLPIQSNFREGLSLAEYIISCYGARKGVVDTAIRTSDSGYLTRRLVDVAQHIVVRKTDCKTHKCISIQPFLEEWKMNIHLYVQQKLIGRILADYVLKDNRCIASRNQDISFDLAIRLLSFKFQSIWVRSPLTCESTRWICQMCYGWSIGYRNLIEVGEAVGIIAAQSIGEPGTQLTLRTFHTGGVFTGDIAQQIRSPLNGIIQLNNSKIRSIRNRYGQPAFVCLDNIHIKVKGKDTYQSIIPTESLLFVKNNQKVQAKQVIAEIRSTIRQSKEEVNKNINSELAGEVFWSNKYYFKEQNLHDLQKNNFFVKNNHNFRNCPTSDSQNENDSNRSNHFLTINSIKYSQEKTNWPISNTGHIWILSGQVYKFHNIQSIFYKQQDKVRIKNILAQKELLVNNGGRYHNFHSQRLSYFQENLMNNSYTHSKKKTKSLSSNFVNNAICGLTILKEKKGKFSFLKNSSFCKKTRTNLQFILEVKNYSRIKHNDLLATLHNPAHRTSTAGMVKYGFLLINSQLDKNLKSYNKNSRKKKISLYQNNQIQPGQSLFWIPEEIHEIYKPFSFLHVKNGEIIQKGTYISEDIQCGTSGLVEINKRNRNHYEISIQPGSLYFLKDKQIALQKDQILIAPGEKIDNTNISDEWLYLKYLKTDQGVSVLFARPAKEYKIDLINHLEHASSLETLYMKKCFDVRISHYTPYEDGQKIRNNAGAQLISASLVFKLNNQNLAHKAEISWTRIKFQRKISYYLQINLRDKILPYSYSLSELKKLKFNSHFSNKNKQINNIDEVILGDTIFHTPLLTKNYGCIRTFSRRRQDNKTSFVLLSSSDQLELPLPIIFFAFISYKRFFNKKLGLIGNLYTKKTKLRNSNQNLFLNLFFISWYIIDEYSCNFLFWGAFSQLIKDARNKYSHNCFPIIIKKAFFSLGKFLSKIEMKILGNLETELGQVISLCNKKIILRIGKPYLATRGAIVHPRNGETIREGDTLMTLIYERLKAGDIIQGLPKIEQLLEARRENVVELIVNRYFLDCTNLLTEELGMLLGSLWGFQFSAWASMERSKLDLVFEIQQVYRSQGVYICDKHIEIIVRQMTSKIIILGDGMTDGFLPGELVEIPRARKTNRAMKSIMFYKPILVGITRASLNTRSFISEASFQETTRVLTKAAIKGRTDWLKGLKENVILGRLIPAGTGSEEIILQRLMNLQKIEKLRKGKSKKYTTSKLDSLLFSKCKSAFLKRHPLNPYCRETFHFILKQQITNSF.

4 residues coordinate Zn(2+): C220, C294, C301, and C304.

The protein belongs to the RNA polymerase beta' chain family. RpoC2 subfamily. In terms of assembly, in plastids the minimal PEP RNA polymerase catalytic core is composed of four subunits: alpha, beta, beta', and beta''. When a (nuclear-encoded) sigma factor is associated with the core the holoenzyme is formed, which can initiate transcription. It depends on Zn(2+) as a cofactor.

The protein localises to the plastid. Its subcellular location is the chloroplast. The enzyme catalyses RNA(n) + a ribonucleoside 5'-triphosphate = RNA(n+1) + diphosphate. Its function is as follows. DNA-dependent RNA polymerase catalyzes the transcription of DNA into RNA using the four ribonucleoside triphosphates as substrates. This is DNA-directed RNA polymerase subunit beta'' from Chara vulgaris (Common stonewort).